Here is a 272-residue protein sequence, read N- to C-terminus: F-box protein PP2-B10 (272 aa).

In terms of domain architecture, F-box spans 11–57 (SSPFDSFPEDCISYIISFTNPRDACVAATVSKTFESTVKSDIIWEKF).

Part of a SCF (ASK-cullin-F-box) protein ligase complex. Interacts with SKP1B/ASK2, ASK11 and ASK12.

It functions in the pathway protein modification; protein ubiquitination. Functionally, component of SCF(ASK-cullin-F-box) E3 ubiquitin ligase complexes, which may mediate the ubiquitination and subsequent proteasomal degradation of target proteins. The sequence is that of F-box protein PP2-B10 (PP2B10) from Arabidopsis thaliana (Mouse-ear cress).